The primary structure comprises 770 residues: Lysine-specific histone demethylase 1 (770 aa).

Residues 1–21 (MSSDTGSEYLDEEIRGDELGP) are disordered. Positions 28 to 126 (LAAAASAARL…FGRYVRSTKI (99 aa)) constitute an SWIRM domain. Residue 137 to 165 (VIVIGAGAAGISAATQLESFGFDVIVLEA) coordinates FAD. Residues 718–739 (NEAVADIPNAPNAPNAQKPEEI) form a disordered region.

The protein belongs to the flavin monoamine oxidase family. As to quaternary structure, probably part of a large repressor complex. Interacts with CoREST protein spr-1. Interacts with chromobox protein homolog hpl-1. Requires FAD as cofactor.

The protein resides in the nucleus. It carries out the reaction N(6),N(6)-dimethyl-L-lysyl(4)-[histone H3] + 2 A + 2 H2O = L-lysyl(4)-[histone H3] + 2 formaldehyde + 2 AH2. Its function is as follows. Histone demethylase that specifically demethylates 'Lys-4' of histone H3, a specific tag for epigenetic transcriptional activation, thereby acting as a corepressor. Acts by oxidizing the substrate by FAD to generate the corresponding imine that is subsequently hydrolyzed. Demethylates both mono- and di-methylated 'Lys-4' of histone H3. May be involved in H3 demethylation in mitotic cells including gut and embryonic cells. Participates in the transcriptional repression of the presenilin protein hop-1. May act via the formation of a multiprotein complex that remodel or modify the chromatin. Together with met-2, set-17 and set-26, required for transgenerational fertility. Plays a role in developmental growth and lifespan regulation in response to ultraviolet-induced damage. The polypeptide is Lysine-specific histone demethylase 1 (Caenorhabditis elegans).